The primary structure comprises 511 residues: Probable lipid II flippase MurJ (511 aa).

A run of 13 helical transmembrane segments spans residues 31–51, 90–110, 130–150, 159–179, 182–202, 237–257, 271–291, 314–334, 354–374, 383–403, 407–427, 443–463, and 481–501; these read IFGAGMATDAFFVAFKLPNLL, LLTLALAVVTVAGMLAAPWVI, LLKITFPYILLISLASLVGAI, IPAFAPTLLNISMIGFALFAA, FNPPVLALAWAVTVGGVLQLV, ILGVSVSQISLIINTIFASFL, LMEFPSGVLGVALGTILLPSL, CFLLALPSAVALGILSGPLTV, LIAYSVGLIGLIVVKVLAPGF, PVKIAIVTLILTQLMNLAFIG, HAGLSLSIGLAACLNASLLYW, AFLLRLVVAVLVMSGVLLGML, and LMAVVLAGIAAYFAALAVLGF.

The protein belongs to the MurJ/MviN family.

The protein resides in the cell inner membrane. It participates in cell wall biogenesis; peptidoglycan biosynthesis. Functionally, involved in peptidoglycan biosynthesis. Transports lipid-linked peptidoglycan precursors from the inner to the outer leaflet of the cytoplasmic membrane. The chain is Probable lipid II flippase MurJ from Escherichia coli O157:H7.